The following is a 291-amino-acid chain: Geranyl diphosphate 2-C-methyltransferase (291 aa).

The protein belongs to the geranyl diphosphate 2-C-methyltransferase family. The cofactor is Mg(2+).

It carries out the reaction (2E)-geranyl diphosphate + S-adenosyl-L-methionine = (E)-2-methylgeranyl diphosphate + S-adenosyl-L-homocysteine + H(+). In terms of biological role, catalyzes the SAM-dependent methylation of geranyl diphosphate (GPP) to yield (E)-2-methylgeranyl diphosphate (2-MeGPP). In Streptomyces ambofaciens (strain ATCC 23877 / 3486 / DSM 40053 / JCM 4204 / NBRC 12836 / NRRL B-2516), this protein is Geranyl diphosphate 2-C-methyltransferase.